The primary structure comprises 190 residues: 6,7-dimethyl-8-ribityllumazine synthase (190 aa).

5-amino-6-(D-ribitylamino)uracil is bound by residues Phe23, 61-63, and 85-87; these read SFE and AVI. Residue 90-91 coordinates (2S)-2-hydroxy-3-oxobutyl phosphate; that stretch reads QT. His93 functions as the Proton donor in the catalytic mechanism. Phe118 is a binding site for 5-amino-6-(D-ribitylamino)uracil. Residue Arg132 coordinates (2S)-2-hydroxy-3-oxobutyl phosphate.

It belongs to the DMRL synthase family.

The enzyme catalyses (2S)-2-hydroxy-3-oxobutyl phosphate + 5-amino-6-(D-ribitylamino)uracil = 6,7-dimethyl-8-(1-D-ribityl)lumazine + phosphate + 2 H2O + H(+). It participates in cofactor biosynthesis; riboflavin biosynthesis; riboflavin from 2-hydroxy-3-oxobutyl phosphate and 5-amino-6-(D-ribitylamino)uracil: step 1/2. Catalyzes the formation of 6,7-dimethyl-8-ribityllumazine by condensation of 5-amino-6-(D-ribitylamino)uracil with 3,4-dihydroxy-2-butanone 4-phosphate. This is the penultimate step in the biosynthesis of riboflavin. The polypeptide is 6,7-dimethyl-8-ribityllumazine synthase (Trichormus variabilis (strain ATCC 29413 / PCC 7937) (Anabaena variabilis)).